Reading from the N-terminus, the 1059-residue chain is Kinesin-like protein KIN-7K, chloroplastic (1059 aa).

Composition is skewed to low complexity over residues 1–35 (MSSR…SAGS) and 43–58 (PRSY…SSHF). The N-terminal 48 residues, 1–48 (MSSRPSSSASSRRSSSPFSAGSRRPPTSSSSSAGSYLTGRLMPRSYST), are a transit peptide targeting the chloroplast. Residues 1–99 (MSSRPSSSAS…SPPSPVPFPS (99 aa)) form a disordered region. Positions 59–69 (FGGGGGSGGGS) are enriched in gly residues. Residues 70–87 (RSTTPGRRGSSSSSLVGP) show a composition bias toward low complexity. Residues 88–97 (VPSPPSPVPF) show a composition bias toward pro residues. Residues 114 to 431 (SISVTIRFRP…LKFASRAKRV (318 aa)) form the Kinesin motor domain. 194-201 (GVTSSGKT) serves as a coordination point for ATP. Positions 435–518 (AARNRMIDEK…IQRLTKLILV (84 aa)) form a coiled coil. The interval 526–570 (ALTDTSSHQRHNSVNEEDKVSTSQDSSMLVQNDSATKDSLSSASP) is disordered. Polar residues predominate over residues 546 to 569 (STSQDSSMLVQNDSATKDSLSSAS). Coiled coils occupy residues 640–674 (EGTK…GEAS), 700–781 (ELEL…EENR), and 862–910 (LEDM…LEND). An RING-type zinc finger spans residues 1013–1048 (CKVCFESATAAVLLPCRHFCLCKPCSLACSECPLCR).

This sequence belongs to the TRAFAC class myosin-kinesin ATPase superfamily. Kinesin family. KIN-7 subfamily.

The protein localises to the plastid. It localises to the chloroplast. This Oryza sativa subsp. japonica (Rice) protein is Kinesin-like protein KIN-7K, chloroplastic.